The primary structure comprises 625 residues: UvrABC system protein C (625 aa).

The 80-residue stretch at 13 to 92 folds into the GIY-YIG domain; it reads DKPGVYIMKD…IKKHRPKFNI (80 aa). A UVR domain is found at 204 to 239; that stretch reads EDIIKKLEKDMKEAADNLEFERAARIRDKINSLKHI.

This sequence belongs to the UvrC family. In terms of assembly, interacts with UvrB in an incision complex.

It localises to the cytoplasm. Its function is as follows. The UvrABC repair system catalyzes the recognition and processing of DNA lesions. UvrC both incises the 5' and 3' sides of the lesion. The N-terminal half is responsible for the 3' incision and the C-terminal half is responsible for the 5' incision. This chain is UvrABC system protein C, found in Acetivibrio thermocellus (strain ATCC 27405 / DSM 1237 / JCM 9322 / NBRC 103400 / NCIMB 10682 / NRRL B-4536 / VPI 7372) (Clostridium thermocellum).